The following is a 192-amino-acid chain: Xanthine phosphoribosyltransferase (192 aa).

Positions 20 and 27 each coordinate xanthine. Position 128–132 (128–132 (AQGEA)) interacts with 5-phospho-alpha-D-ribose 1-diphosphate. Lys156 is a xanthine binding site.

This sequence belongs to the purine/pyrimidine phosphoribosyltransferase family. Xpt subfamily. In terms of assembly, homodimer.

Its subcellular location is the cytoplasm. The catalysed reaction is XMP + diphosphate = xanthine + 5-phospho-alpha-D-ribose 1-diphosphate. It participates in purine metabolism; XMP biosynthesis via salvage pathway; XMP from xanthine: step 1/1. In terms of biological role, converts the preformed base xanthine, a product of nucleic acid breakdown, to xanthosine 5'-monophosphate (XMP), so it can be reused for RNA or DNA synthesis. The chain is Xanthine phosphoribosyltransferase from Lactobacillus helveticus (strain DPC 4571).